Here is a 310-residue protein sequence, read N- to C-terminus: tRNA pseudouridine synthase B (310 aa).

The active-site Nucleophile is the Asp47.

This sequence belongs to the pseudouridine synthase TruB family. Type 1 subfamily.

The enzyme catalyses uridine(55) in tRNA = pseudouridine(55) in tRNA. Functionally, responsible for synthesis of pseudouridine from uracil-55 in the psi GC loop of transfer RNAs. The protein is tRNA pseudouridine synthase B of Caulobacter vibrioides (strain ATCC 19089 / CIP 103742 / CB 15) (Caulobacter crescentus).